Reading from the N-terminus, the 444-residue chain is E3 ubiquitin-protein ligase APD2 (444 aa).

A compositionally biased stretch (low complexity) spans 1–15 (MSLPDSLPSSSSSPP). Residues 1-41 (MSLPDSLPSSSSSPPVTREETGFHRFEHHGNDSGFDHRDRP) form a disordered region. Positions 17 to 41 (TREETGFHRFEHHGNDSGFDHRDRP) are enriched in basic and acidic residues. Helical transmembrane passes span 74–94 (VVVV…GLYG) and 312–332 (IAYI…SSLF). The RING-type zinc finger occupies 393 to 432 (CAICYDAPRDCFFLSCGHCVACFQCGTRIAETSGFCPVCR).

Interacts with At1g78040, At1g10650, VHA-c4/AVAP4, VHA-c''2/VMA16 and TUFA. As to expression, expressed in the shoot apical meristems (SAM), root tips, pollen and inflorescences.

Its subcellular location is the endomembrane system. The catalysed reaction is S-ubiquitinyl-[E2 ubiquitin-conjugating enzyme]-L-cysteine + [acceptor protein]-L-lysine = [E2 ubiquitin-conjugating enzyme]-L-cysteine + N(6)-ubiquitinyl-[acceptor protein]-L-lysine.. It functions in the pathway protein modification; protein ubiquitination. Exhibits E2-dependent E3 ligase activity. Involved in pollen mitosis II (PMII) regulation during male gametogenesis. In Arabidopsis thaliana (Mouse-ear cress), this protein is E3 ubiquitin-protein ligase APD2.